The primary structure comprises 347 residues: 3',5'-bisphosphate nucleotidase 2 (347 aa).

The active-site Proton acceptor is Asp46. 4 residues coordinate Mg(2+): Glu71, Asp134, Ile136, and Asp137. Thr139 serves as the catalytic Proton acceptor. The adenosine 3',5'-bisphosphate site is built by Thr139, Ser255, Lys258, Arg272, and Asp284. AMP is bound by residues Ser255, Lys258, Arg272, and Asp284. A Mg(2+)-binding site is contributed by Asp284.

It belongs to the inositol monophosphatase superfamily. Mg(2+) serves as cofactor. As to expression, very low expression in roots, leaves, stems, flowers and siliques.

The enzyme catalyses adenosine 3',5'-bisphosphate + H2O = AMP + phosphate. It catalyses the reaction 3'-phosphoadenylyl sulfate + H2O = adenosine 5'-phosphosulfate + phosphate. It carries out the reaction 1D-myo-inositol 1,4-bisphosphate + H2O = 1D-myo-inositol 4-phosphate + phosphate. It participates in signal transduction; phosphatidylinositol signaling pathway. Inhibited by Li(+) (IC(50)=10 mM), Na(+) (IC(50)=200 mM) and Ca(2+) (IC(50)=0.03 mM). Phosphatase that converts adenosine 3'-phosphate 5'-phosphosulfate (PAPS) to adenosine 5'-phosphosulfate (APS) and 3'-phosphoadenosine 5'-phosphate (3'-PAP) to AMP. May regulate the flux of sulfur in the sulfur-activation pathway by converting PAPS to APS. Prevents both the toxicity of PAP on RNA processing enzymes as well as the product inhibition by PAP of sulfate conjugation. Is also able to hydrolyze inositol 1,4-bisphosphate. This chain is 3',5'-bisphosphate nucleotidase 2, found in Arabidopsis thaliana (Mouse-ear cress).